Consider the following 374-residue polypeptide: Peptide chain release factor 2 (374 aa).

Gln250 carries the post-translational modification N5-methylglutamine.

This sequence belongs to the prokaryotic/mitochondrial release factor family. Post-translationally, methylated by PrmC. Methylation increases the termination efficiency of RF2.

The protein resides in the cytoplasm. In terms of biological role, peptide chain release factor 2 directs the termination of translation in response to the peptide chain termination codons UGA and UAA. The polypeptide is Peptide chain release factor 2 (Roseobacter denitrificans (strain ATCC 33942 / OCh 114) (Erythrobacter sp. (strain OCh 114))).